Reading from the N-terminus, the 233-residue chain is tRNA pseudouridine synthase B (233 aa).

Asp48 (nucleophile) is an active-site residue.

Belongs to the pseudouridine synthase TruB family. Type 1 subfamily.

The enzyme catalyses uridine(55) in tRNA = pseudouridine(55) in tRNA. Functionally, responsible for synthesis of pseudouridine from uracil-55 in the psi GC loop of transfer RNAs. This chain is tRNA pseudouridine synthase B, found in Bacteroides fragilis (strain ATCC 25285 / DSM 2151 / CCUG 4856 / JCM 11019 / LMG 10263 / NCTC 9343 / Onslow / VPI 2553 / EN-2).